Reading from the N-terminus, the 260-residue chain is Snake venom serine protease homolog (260 aa).

An N-terminal signal peptide occupies residues 1-18; it reads MVLVRVLANLLMLQLSYA. Positions 19–24 are excised as a propeptide; sequence QKSSEL. The region spanning 25-251 is the Peptidase S1 domain; sequence IIGGDECNIN…HLNWIQSIIA (227 aa). Disulfide bonds link Cys-31–Cys-165, Cys-52–Cys-68, Cys-100–Cys-258, Cys-144–Cys-212, Cys-176–Cys-191, and Cys-202–Cys-227. 2 N-linked (GlcNAc...) asparagine glycosylation sites follow: Asn-123 and Asn-124. An N-linked (GlcNAc...) asparagine glycan is attached at Asn-253.

The protein belongs to the peptidase S1 family. Snake venom subfamily. Expressed by the venom gland.

Its subcellular location is the secreted. Its function is as follows. Snake venom serine protease homolog that may act in the hemostasis system of the prey. This chain is Snake venom serine protease homolog, found in Protobothrops jerdonii (Jerdon's pitviper).